Reading from the N-terminus, the 394-residue chain is Elongation factor Tu 2 (394 aa).

The region spanning 10–204 is the tr-type G domain; that stretch reads KPHVNVGTIG…ALDSYIPEPE (195 aa). A G1 region spans residues 19-26; sequence GHVDHGKT. GTP is bound at residue 19–26; sequence GHVDHGKT. Thr26 lines the Mg(2+) pocket. The tract at residues 60 to 64 is G2; it reads GITIS. The segment at 81–84 is G3; sequence DCPG. GTP is bound by residues 81–85 and 136–139; these read DCPGH and NKCD. Residues 136 to 139 are G4; it reads NKCD. Positions 174-176 are G5; it reads SAL.

The protein belongs to the TRAFAC class translation factor GTPase superfamily. Classic translation factor GTPase family. EF-Tu/EF-1A subfamily. As to quaternary structure, monomer.

It localises to the cytoplasm. The catalysed reaction is GTP + H2O = GDP + phosphate + H(+). In terms of biological role, GTP hydrolase that promotes the GTP-dependent binding of aminoacyl-tRNA to the A-site of ribosomes during protein biosynthesis. This is Elongation factor Tu 2 from Photorhabdus laumondii subsp. laumondii (strain DSM 15139 / CIP 105565 / TT01) (Photorhabdus luminescens subsp. laumondii).